The following is a 306-amino-acid chain: tRNA pseudouridine synthase B (306 aa).

The active-site Nucleophile is Asp-48.

This sequence belongs to the pseudouridine synthase TruB family. Type 1 subfamily.

The catalysed reaction is uridine(55) in tRNA = pseudouridine(55) in tRNA. Functionally, responsible for synthesis of pseudouridine from uracil-55 in the psi GC loop of transfer RNAs. The chain is tRNA pseudouridine synthase B from Ectopseudomonas mendocina (strain ymp) (Pseudomonas mendocina).